Consider the following 379-residue polypeptide: Beta sliding clamp (379 aa).

The protein belongs to the beta sliding clamp family. In terms of assembly, forms a ring-shaped head-to-tail homodimer around DNA which binds and tethers DNA polymerases and other proteins to the DNA. The DNA replisome complex has a single clamp-loading complex (3 tau and 1 each of delta, delta', psi and chi subunits) which binds 3 Pol III cores (1 core on the leading strand and 2 on the lagging strand) each with a beta sliding clamp dimer. Additional proteins in the replisome are other copies of gamma, psi and chi, Ssb, DNA helicase and RNA primase.

The protein localises to the cytoplasm. Its function is as follows. Confers DNA tethering and processivity to DNA polymerases and other proteins. Acts as a clamp, forming a ring around DNA (a reaction catalyzed by the clamp-loading complex) which diffuses in an ATP-independent manner freely and bidirectionally along dsDNA. Initially characterized for its ability to contact the catalytic subunit of DNA polymerase III (Pol III), a complex, multichain enzyme responsible for most of the replicative synthesis in bacteria; Pol III exhibits 3'-5' exonuclease proofreading activity. The beta chain is required for initiation of replication as well as for processivity of DNA replication. The sequence is that of Beta sliding clamp (dnaN) from Rickettsia bellii (strain RML369-C).